The primary structure comprises 173 residues: Crossover junction endodeoxyribonuclease RuvC (173 aa).

Active-site residues include Asp-11, Glu-71, and Asp-143. Residues Asp-11, Glu-71, and Asp-143 each contribute to the Mg(2+) site.

The protein belongs to the RuvC family. In terms of assembly, homodimer which binds Holliday junction (HJ) DNA. The HJ becomes 2-fold symmetrical on binding to RuvC with unstacked arms; it has a different conformation from HJ DNA in complex with RuvA. In the full resolvosome a probable DNA-RuvA(4)-RuvB(12)-RuvC(2) complex forms which resolves the HJ. It depends on Mg(2+) as a cofactor.

Its subcellular location is the cytoplasm. The catalysed reaction is Endonucleolytic cleavage at a junction such as a reciprocal single-stranded crossover between two homologous DNA duplexes (Holliday junction).. The RuvA-RuvB-RuvC complex processes Holliday junction (HJ) DNA during genetic recombination and DNA repair. Endonuclease that resolves HJ intermediates. Cleaves cruciform DNA by making single-stranded nicks across the HJ at symmetrical positions within the homologous arms, yielding a 5'-phosphate and a 3'-hydroxyl group; requires a central core of homology in the junction. The consensus cleavage sequence is 5'-(A/T)TT(C/G)-3'. Cleavage occurs on the 3'-side of the TT dinucleotide at the point of strand exchange. HJ branch migration catalyzed by RuvA-RuvB allows RuvC to scan DNA until it finds its consensus sequence, where it cleaves and resolves the cruciform DNA. This Brucella suis biovar 1 (strain 1330) protein is Crossover junction endodeoxyribonuclease RuvC.